Reading from the N-terminus, the 292-residue chain is MTGSLSEIKVRITSTQKTGKITSAMKMVSSAKLVKSEQAAKDFQIYASKIRQITTDLLHSDLRKGSSNPMLISRPIKKTAYIVITSDKGLVGAYNSTILKAVMDTIKDYHPKGDDYTIISIGGMGSDFFRARHIPVAFELRGLEDNPSFEEVNRIISKSVEMYKNELFDELYVCYSHHINSLTSQVRVEKMLPISDLDADEASEDNVANFELEPSREAILEQLLPQYAESLIYGAIIDAKTAEHAAGMTAMQTATDNADKVIEDLTKLYNRVRQAAITQEITEIVAGANALD.

Belongs to the ATPase gamma chain family. As to quaternary structure, F-type ATPases have 2 components, CF(1) - the catalytic core - and CF(0) - the membrane proton channel. CF(1) has five subunits: alpha(3), beta(3), gamma(1), delta(1), epsilon(1). CF(0) has three main subunits: a, b and c.

It is found in the cell membrane. Produces ATP from ADP in the presence of a proton gradient across the membrane. The gamma chain is believed to be important in regulating ATPase activity and the flow of protons through the CF(0) complex. This Streptococcus mutans serotype c (strain ATCC 700610 / UA159) protein is ATP synthase gamma chain.